The following is a 209-amino-acid chain: Histidine biosynthesis bifunctional protein HisIE (209 aa).

Residues 1–123 (MEIEKLLEQV…VLPIDYSLSI (123 aa)) form a phosphoribosyl-AMP cyclohydrolase region. The segment at 124 to 209 (LKELEEIIKR…VMNELRRRRK (86 aa)) is phosphoribosyl-ATP pyrophosphohydrolase.

It in the N-terminal section; belongs to the PRA-CH family. The protein in the C-terminal section; belongs to the PRA-PH family.

The protein localises to the cytoplasm. It carries out the reaction 1-(5-phospho-beta-D-ribosyl)-ATP + H2O = 1-(5-phospho-beta-D-ribosyl)-5'-AMP + diphosphate + H(+). The enzyme catalyses 1-(5-phospho-beta-D-ribosyl)-5'-AMP + H2O = 1-(5-phospho-beta-D-ribosyl)-5-[(5-phospho-beta-D-ribosylamino)methylideneamino]imidazole-4-carboxamide. Its pathway is amino-acid biosynthesis; L-histidine biosynthesis; L-histidine from 5-phospho-alpha-D-ribose 1-diphosphate: step 2/9. It participates in amino-acid biosynthesis; L-histidine biosynthesis; L-histidine from 5-phospho-alpha-D-ribose 1-diphosphate: step 3/9. This Pyrococcus furiosus (strain ATCC 43587 / DSM 3638 / JCM 8422 / Vc1) protein is Histidine biosynthesis bifunctional protein HisIE (hisI).